Reading from the N-terminus, the 445-residue chain is NADH-quinone oxidoreductase subunit F (445 aa).

Residue 61-70 (GRGGAGFSTG) coordinates NAD(+). Residue 174–221 (GAGRYICGEETALINSLEGRRANPRSKPPFPATSGVWGKPTCVNNVET) coordinates FMN. [4Fe-4S] cluster is bound by residues Cys-351, Cys-354, Cys-357, and Cys-398.

Belongs to the complex I 51 kDa subunit family. Composed of 13 different subunits. Subunits NuoCD, E, F, and G constitute the peripheral sector of the complex. It depends on FMN as a cofactor. [4Fe-4S] cluster is required as a cofactor.

It catalyses the reaction a quinone + NADH + 5 H(+)(in) = a quinol + NAD(+) + 4 H(+)(out). In terms of biological role, NDH-1 shuttles electrons from NADH, via FMN and iron-sulfur (Fe-S) centers, to quinones in the respiratory chain. The immediate electron acceptor for the enzyme in this species is believed to be ubiquinone. Couples the redox reaction to proton translocation (for every two electrons transferred, four hydrogen ions are translocated across the cytoplasmic membrane), and thus conserves the redox energy in a proton gradient. In Salmonella typhimurium (strain LT2 / SGSC1412 / ATCC 700720), this protein is NADH-quinone oxidoreductase subunit F (nuoF).